The primary structure comprises 147 residues: Lipoprotein YfjS (147 aa).

The N-terminal stretch at Met-1–Ala-20 is a signal peptide. Cys-21 is lipidated: N-palmitoyl cysteine. Residue Cys-21 is the site of S-diacylglycerol cysteine attachment.

This sequence to E.coli YafY.

Its subcellular location is the cell inner membrane. Does not induce degP when overexpressed unless it is mutated to resemble YafY. The sequence is that of Lipoprotein YfjS (yfjS) from Escherichia coli (strain K12).